The primary structure comprises 65 residues: KKDGYLVDKTGCKYTCWKLGENKYCNRECTWKHRGGNYGYCYGFGCYCEGLADSTQTWPLPNKSC.

The region spanning 2 to 65 is the LCN-type CS-alpha/beta domain; it reads KDGYLVDKTG…QTWPLPNKSC (64 aa). 4 disulfide bridges follow: Cys12/Cys65, Cys16/Cys41, Cys25/Cys46, and Cys29/Cys48.

The protein belongs to the long (4 C-C) scorpion toxin superfamily. Sodium channel inhibitor family. Beta subfamily. Expressed by the venom gland.

The protein resides in the secreted. Functionally, a probable toxin that has no activity on the tested sodium channels (when tested at 200 nM) and is not toxic to mice, crickets or sweet water shrimps. It resembles Beta toxins that bind voltage-independently at site-4 of sodium channels and shift the voltage of activation toward more negative potentials, thereby affecting sodium channel activation and promoting spontaneous and repetitive firing. This Centruroides bonito (Scorpion) protein is Toxin Cbo5.